The primary structure comprises 65 residues: Large ribosomal subunit protein bL35 (65 aa).

Positions 24-48 (RRKAGKSHLLEHKSSDKKRSMSKTT) are disordered. Over residues 31–42 (HLLEHKSSDKKR) the composition is skewed to basic and acidic residues.

It belongs to the bacterial ribosomal protein bL35 family.

The protein is Large ribosomal subunit protein bL35 of Nostoc punctiforme (strain ATCC 29133 / PCC 73102).